A 384-amino-acid chain; its full sequence is MGSLCSRNKHYSQADDEENTQTAEIERRIEQETKAEKHIQKLLLLGAGDSGKSTIFKQIKLLFQTGFDEEELKNYIPVIHANVYQTTKILHDGSKELAQNELEASKYLLSAENKEIGEKLSEIGGRLDYPHLTKDLVQDIEALWKDPAIQETLLRGNELQVPDCAHYFMENLERFSDVHYIPTKEDVLFARIRTTGVVEIQFSPVGENKKSGEVYRLFDVGGQRNERRKWIHLFEGVTAVIFCAAISEYDQTLFEDERKNRMMETKELFEWVLKQPCFEKTSFMLFLNKFDIFEQKVPKVPLNACEWFKDYQSVSTGKQEIEHAYEFVKKKFEESYFQCTAPDRVDRVFKIYRTTALDQKLVKKTFKLVDETLRRRNLFEAGLL.

The tract at residues 1–22 (MGSLCSRNKHYSQADDEENTQT) is disordered. Residue Gly2 is the site of N-myristoyl glycine attachment. Cys5 is lipidated: S-palmitoyl cysteine. A G-alpha domain is found at 38–384 (HIQKLLLLGA…RRNLFEAGLL (347 aa)). Positions 41–54 (KLLLLGAGDSGKST) are G1 motif. GTP-binding residues include Asp49, Ser50, Gly51, Lys52, Ser53, Thr54, Asp163, Leu188, Thr194, Gly222, Asn288, Lys289, Asp291, and Ala356. Ser53 lines the Mg(2+) pocket. A G2 motif region spans residues 186–194 (DVLFARIRT). Mg(2+) is bound at residue Thr194. The tract at residues 215-224 (YRLFDVGGQR) is G3 motif. The G4 motif stretch occupies residues 284 to 291 (MLFLNKFD). A G5 motif region spans residues 354–359 (TTALDQ).

The protein belongs to the G-alpha family. G proteins are composed of 3 units; alpha, beta and gamma. The alpha chain contains the guanine nucleotide binding site. Mg(2+) serves as cofactor.

Functionally, guanine nucleotide-binding proteins (G proteins) are involved as modulators or transducers in various transmembrane signaling systems. This Solanum lycopersicum (Tomato) protein is Guanine nucleotide-binding protein alpha-1 subunit (GPA1).